We begin with the raw amino-acid sequence, 438 residues long: Trigger factor (438 aa).

The 86-residue stretch at 162–247 (GDRVNINYQG…LNKVEAPKLP (86 aa)) folds into the PPIase FKBP-type domain.

This sequence belongs to the FKBP-type PPIase family. Tig subfamily.

The protein resides in the cytoplasm. It carries out the reaction [protein]-peptidylproline (omega=180) = [protein]-peptidylproline (omega=0). In terms of biological role, involved in protein export. Acts as a chaperone by maintaining the newly synthesized protein in an open conformation. Functions as a peptidyl-prolyl cis-trans isomerase. The chain is Trigger factor from Nitrosomonas eutropha (strain DSM 101675 / C91 / Nm57).